The chain runs to 486 residues: Cardiolipin synthase A (486 aa).

Transmembrane regions (helical) follow at residues 3-23 (TVYTLVSWLAILGYWLLIAGV) and 38-58 (MAWLLIIYILPLVGIIAYLAV). 2 PLD phosphodiesterase domains span residues 219 to 246 (MDLRQHRKMIMIDNYIAYTGSMNMVDPR) and 399 to 426 (EGGLLHTKSVLVDGELSLVGTVNLDMRS). Catalysis depends on residues histidine 224, lysine 226, aspartate 231, histidine 404, lysine 406, and aspartate 411.

The protein belongs to the phospholipase D family. Cardiolipin synthase subfamily. ClsA sub-subfamily.

It localises to the cell inner membrane. The catalysed reaction is 2 a 1,2-diacyl-sn-glycero-3-phospho-(1'-sn-glycerol) = a cardiolipin + glycerol. Catalyzes the reversible phosphatidyl group transfer from one phosphatidylglycerol molecule to another to form cardiolipin (CL) (diphosphatidylglycerol) and glycerol. This chain is Cardiolipin synthase A, found in Escherichia coli O7:K1 (strain IAI39 / ExPEC).